The sequence spans 809 residues: Cyclic nucleotide-gated channel beta-3 (809 aa).

Disordered stretches follow at residues Met1–Ala121 and Gly153–Asp178. Residues Met1 to Tyr218 lie on the Cytoplasmic side of the membrane. Over residues Gln22–Ser31 the composition is skewed to basic and acidic residues. Positions His32–Gln43 are enriched in polar residues. Basic and acidic residues predominate over residues Glu44–Leu53. Residues Thr55–Pro88 show a composition bias toward polar residues. The chain crosses the membrane as a helical span at residues Leu219–Phe242. At Pro243–Asn249 the chain is on the extracellular side. Residues Ile250–Phe270 form a helical membrane-spanning segment. Over Ile271–Lys299 the chain is Cytoplasmic. The chain crosses the membrane as a helical span at residues Phe300–Phe317. Over Gly318–Asn320 the chain is Extracellular. Residues Pro321 to Phe335 form a helical membrane-spanning segment. At Glu336–Ala348 the chain is on the cytoplasmic side. The ion conduction pathway stretch occupies residues Ala348–Ala447. Residues Tyr349 to Tyr371 traverse the membrane as a helical segment. Residues Tyr372–Glu393 are Extracellular-facing. The next 2 membrane-spanning stretches (helical) occupy residues Tyr394–Ile420 and Val421–Ile445. A selectivity filter region spans residues Thr407–Gly410. The Cytoplasmic portion of the chain corresponds to Gly446–Gln809. Residues Ala450–Lys526 form a C-linker region. The tract at residues Thr530 to Leu646 is cyclic nucleotide-binding domain. The 3',5'-cyclic GMP site is built by Gly591, Glu592, Arg604, and Thr605. The interval Gln698–Pro776 is disordered. The segment covering Asn716–Glu755 has biased composition (basic and acidic residues).

It belongs to the cyclic nucleotide-gated cation channel (TC 1.A.1.5) family. CNGB3 subfamily. As to quaternary structure, forms heterotetrameric channels composed of CNGA3 and CNGB3 subunits with 3:1 stoichiometry. In terms of tissue distribution, expressed specifically in the retina.

The protein resides in the cell membrane. It catalyses the reaction Ca(2+)(in) = Ca(2+)(out). It carries out the reaction Na(+)(in) = Na(+)(out). The enzyme catalyses K(+)(in) = K(+)(out). The catalysed reaction is NH4(+)(in) = NH4(+)(out). It catalyses the reaction Rb(+)(in) = Rb(+)(out). It carries out the reaction Li(+)(in) = Li(+)(out). The enzyme catalyses Cs(+)(in) = Cs(+)(out). Pore-forming subunit of the cone cyclic nucleotide-gated channel. Mediates cone photoresponses at bright light converting transient changes in intracellular cGMP levels into electrical signals. In the dark, cGMP levels are high and keep the channel open enabling a steady inward current carried by Na(+) and Ca(2+) ions that leads to membrane depolarization and neurotransmitter release from synaptic terminals. Upon photon absorption cGMP levels decline leading to channel closure and membrane hyperpolarization that ultimately slows neurotransmitter release and signals the presence of light, the end point of the phototransduction cascade. Conducts cGMP- and cAMP-gated ion currents, with permeability for monovalent and divalent cations. The polypeptide is Cyclic nucleotide-gated channel beta-3 (Homo sapiens (Human)).